We begin with the raw amino-acid sequence, 671 residues long: Archaeal Rqc2 homolog aRqcH (671 aa).

Coiled-coil stretches lie at residues 291–363 (KVVV…ARIK) and 410–465 (RKNA…MQMK).

This sequence belongs to the NEMF family. Associates with stalled 50S ribosomal subunits.

In terms of biological role, probably part of the ribosome quality control system (RQC). May mediate the addition of alanine residues (Ala tailing) to incompletely synthesized nascent chains from stalled ribosomes, leading to their degradation. In Methanocaldococcus jannaschii (strain ATCC 43067 / DSM 2661 / JAL-1 / JCM 10045 / NBRC 100440) (Methanococcus jannaschii), this protein is Archaeal Rqc2 homolog aRqcH.